We begin with the raw amino-acid sequence, 160 residues long: Cyclic pyranopterin monophosphate synthase (160 aa).

Residues L73 to H75 and M110 to E111 each bind substrate. Residue D125 is part of the active site.

Belongs to the MoaC family. As to quaternary structure, homohexamer; trimer of dimers.

The catalysed reaction is (8S)-3',8-cyclo-7,8-dihydroguanosine 5'-triphosphate = cyclic pyranopterin phosphate + diphosphate. It participates in cofactor biosynthesis; molybdopterin biosynthesis. Catalyzes the conversion of (8S)-3',8-cyclo-7,8-dihydroguanosine 5'-triphosphate to cyclic pyranopterin monophosphate (cPMP). The chain is Cyclic pyranopterin monophosphate synthase from Pseudomonas aeruginosa (strain LESB58).